We begin with the raw amino-acid sequence, 165 residues long: 2-C-methyl-D-erythritol 2,4-cyclodiphosphate synthase (165 aa).

Residues Asp-11 and His-13 each contribute to the a divalent metal cation site. 4-CDP-2-C-methyl-D-erythritol 2-phosphate-binding positions include 11–13 and 40–41; these read DVH and HS. A divalent metal cation is bound at residue His-48. Residues 62 to 64, 67 to 71, 137 to 140, Phe-144, and Arg-147 each bind 4-CDP-2-C-methyl-D-erythritol 2-phosphate; these read DIG, FPDTD, and TTSE.

It belongs to the IspF family. In terms of assembly, homotrimer. A divalent metal cation serves as cofactor.

The catalysed reaction is 4-CDP-2-C-methyl-D-erythritol 2-phosphate = 2-C-methyl-D-erythritol 2,4-cyclic diphosphate + CMP. The protein operates within isoprenoid biosynthesis; isopentenyl diphosphate biosynthesis via DXP pathway; isopentenyl diphosphate from 1-deoxy-D-xylulose 5-phosphate: step 4/6. Functionally, involved in the biosynthesis of isopentenyl diphosphate (IPP) and dimethylallyl diphosphate (DMAPP), two major building blocks of isoprenoid compounds. Catalyzes the conversion of 4-diphosphocytidyl-2-C-methyl-D-erythritol 2-phosphate (CDP-ME2P) to 2-C-methyl-D-erythritol 2,4-cyclodiphosphate (ME-CPP) with a corresponding release of cytidine 5-monophosphate (CMP). The protein is 2-C-methyl-D-erythritol 2,4-cyclodiphosphate synthase of Rubrobacter xylanophilus (strain DSM 9941 / JCM 11954 / NBRC 16129 / PRD-1).